Consider the following 141-residue polypeptide: Hemoglobin subunit alpha-A (141 aa).

The Globin domain occupies 1 to 141 (VLSANDKTNV…VGNVLSAKYR (141 aa)). Histidine 58 provides a ligand contact to O2. Histidine 87 is a heme b binding site.

This sequence belongs to the globin family. In terms of assembly, heterotetramer of two alpha chains and two beta chains. In terms of tissue distribution, red blood cells.

Involved in oxygen transport from the lung to the various peripheral tissues. The protein is Hemoglobin subunit alpha-A (HBAA) of Trigonoceps occipitalis (White-headed vulture).